The following is a 199-amino-acid chain: Transmembrane protein 9B (199 aa).

The first 34 residues, 1–34, serve as a signal peptide directing secretion; sequence MASLWCGNLLRLGSGLSMSCLALSVLLLAQLTGA. N-linked (GlcNAc...) asparagine glycosylation occurs at Asn61. Residues 106–126 traverse the membrane as a helical segment; it reads IIIYLSILGLLLLYMVYLTLV. Residues Ser143 and Ser190 each carry the phosphoserine modification.

This sequence belongs to the TMEM9 family. In terms of processing, N-glycosylated.

The protein resides in the lysosome membrane. It is found in the early endosome membrane. Functionally, enhances production of pro-inflammatory cytokines induced by TNF, IL1B, and TLR ligands. Has a role in TNF activation of both the NF-kappaB and MAPK pathways. The sequence is that of Transmembrane protein 9B (Tmem9b) from Mus musculus (Mouse).